A 239-amino-acid polypeptide reads, in one-letter code: NADH-quinone oxidoreductase subunit I 1 (239 aa).

4Fe-4S ferredoxin-type domains are found at residues 81 to 111 (LVPREDGKPRCVACYMCATICPAQCIYIEAA) and 123 to 152 (AKFVIDELRCIVCGFCVEACPKDAIRMDSG). Positions 91, 94, 97, 101, 132, 135, 138, and 142 each coordinate [4Fe-4S] cluster.

Belongs to the complex I 23 kDa subunit family. In terms of assembly, NDH-1 is composed of 14 different subunits. Subunits NuoA, H, J, K, L, M, N constitute the membrane sector of the complex. [4Fe-4S] cluster serves as cofactor.

Its subcellular location is the cell inner membrane. It carries out the reaction a quinone + NADH + 5 H(+)(in) = a quinol + NAD(+) + 4 H(+)(out). In terms of biological role, NDH-1 shuttles electrons from NADH, via FMN and iron-sulfur (Fe-S) centers, to quinones in the respiratory chain. The immediate electron acceptor for the enzyme in this species is believed to be ubiquinone. Couples the redox reaction to proton translocation (for every two electrons transferred, four hydrogen ions are translocated across the cytoplasmic membrane), and thus conserves the redox energy in a proton gradient. The sequence is that of NADH-quinone oxidoreductase subunit I 1 from Anaeromyxobacter dehalogenans (strain 2CP-C).